The following is a 320-amino-acid chain: Cytochrome f (320 aa).

Positions 1-35 (MENKNTFSWVKEQMTRSISVSIMIYVITQTSISNA) are cleaved as a signal peptide. Residues Tyr-36, Cys-56, Cys-59, and His-60 each contribute to the heme site. The helical transmembrane segment at 286–306 (VQGLLFFFASVILAQVFLVLK) threads the bilayer.

It belongs to the cytochrome f family. In terms of assembly, the 4 large subunits of the cytochrome b6-f complex are cytochrome b6, subunit IV (17 kDa polypeptide, petD), cytochrome f and the Rieske protein, while the 4 small subunits are PetG, PetL, PetM and PetN. The complex functions as a dimer. Heme serves as cofactor.

Its subcellular location is the plastid. The protein localises to the chloroplast thylakoid membrane. In terms of biological role, component of the cytochrome b6-f complex, which mediates electron transfer between photosystem II (PSII) and photosystem I (PSI), cyclic electron flow around PSI, and state transitions. The protein is Cytochrome f of Lolium perenne (Perennial ryegrass).